Reading from the N-terminus, the 352-residue chain is Ribosomal RNA large subunit methyltransferase M (352 aa).

S-adenosyl-L-methionine is bound by residues serine 184, 217 to 220 (APGG), aspartate 236, aspartate 256, and aspartate 272. Lysine 301 (proton acceptor) is an active-site residue.

Belongs to the class I-like SAM-binding methyltransferase superfamily. RNA methyltransferase RlmE family. RlmM subfamily. Monomer.

The protein localises to the cytoplasm. The enzyme catalyses cytidine(2498) in 23S rRNA + S-adenosyl-L-methionine = 2'-O-methylcytidine(2498) in 23S rRNA + S-adenosyl-L-homocysteine + H(+). Its function is as follows. Catalyzes the 2'-O-methylation at nucleotide C2498 in 23S rRNA. In Pseudomonas aeruginosa (strain UCBPP-PA14), this protein is Ribosomal RNA large subunit methyltransferase M.